We begin with the raw amino-acid sequence, 200 residues long: Ras-related protein Rab5 (200 aa).

GTP contacts are provided by residues 17 to 25 (GDMGAGKSS), 36 to 42 (LEFQEST), 65 to 69 (DTAGQ), 123 to 126 (NKAD), and 153 to 155 (SAK). Positions 39-47 (QESTIGAAF) match the Effector region motif. Residues Cys-198 and Cys-199 are each lipidated (S-geranylgeranyl cysteine).

The protein belongs to the small GTPase superfamily. Rab family. Virtually not expressed in leaves, higher in stems and roots, and highest in flowers.

The protein resides in the cell membrane. Functionally, protein transport. Probably involved in vesicular traffic. This is Ras-related protein Rab5 (RAB5) from Nicotiana tabacum (Common tobacco).